The following is a 438-amino-acid chain: Na(+)/H(+) antiporter NhaA (438 aa).

11 consecutive transmembrane segments (helical) span residues 23–43 (FGGI…NSFV), 62–82 (FFIG…LFFL), 104–124 (SFPV…YFFL), 133–153 (GFGI…MLLG), 162–182 (VFLI…IALF), 185–205 (TNLK…LALL), 212–232 (SLIP…QSGI), 302–322 (FLAP…NAGV), 337–357 (LGVI…ITFI), 372–392 (WWHI…SMFI), and 410–430 (IAIL…LFLL).

This sequence belongs to the NhaA Na(+)/H(+) (TC 2.A.33) antiporter family.

It localises to the cell inner membrane. The catalysed reaction is Na(+)(in) + 2 H(+)(out) = Na(+)(out) + 2 H(+)(in). Na(+)/H(+) antiporter that extrudes sodium in exchange for external protons. The chain is Na(+)/H(+) antiporter NhaA from Helicobacter acinonychis (strain Sheeba).